The chain runs to 659 residues: Centrosomal protein of 76 kDa (659 aa).

2 positions are modified to phosphoserine: S75 and S83.

Belongs to the CEP76 family. In terms of assembly, interacts with CCP110 and CEP97.

It localises to the cytoplasm. The protein localises to the cytoskeleton. Its subcellular location is the microtubule organizing center. The protein resides in the centrosome. It is found in the centriole. Functionally, centrosomal protein involved in regulation of centriole duplication. Required to limit centriole duplication to once per cell cycle by preventing centriole reduplication. In Homo sapiens (Human), this protein is Centrosomal protein of 76 kDa (CEP76).